The chain runs to 461 residues: Fumarate hydratase class II (461 aa).

Substrate-binding positions include 97-99 (SGT), 127-130 (HPND), 137-139 (SSN), and T185. Catalysis depends on H186, which acts as the Proton donor/acceptor. The active site involves S316. Substrate-binding positions include S317 and 322–324 (KVN).

The protein belongs to the class-II fumarase/aspartase family. Fumarase subfamily. As to quaternary structure, homotetramer.

It is found in the cytoplasm. The enzyme catalyses (S)-malate = fumarate + H2O. It participates in carbohydrate metabolism; tricarboxylic acid cycle; (S)-malate from fumarate: step 1/1. Involved in the TCA cycle. Catalyzes the stereospecific interconversion of fumarate to L-malate. The polypeptide is Fumarate hydratase class II (Staphylococcus aureus (strain Mu50 / ATCC 700699)).